The following is a 537-amino-acid chain: Chaperonin GroEL (537 aa).

Residues 29–32 (TLGP), 86–90 (DGTTT), glycine 413, 477–479 (NAA), and aspartate 493 each bind ATP.

This sequence belongs to the chaperonin (HSP60) family. Forms a cylinder of 14 subunits composed of two heptameric rings stacked back-to-back. Interacts with the co-chaperonin GroES.

Its subcellular location is the cytoplasm. It catalyses the reaction ATP + H2O + a folded polypeptide = ADP + phosphate + an unfolded polypeptide.. Together with its co-chaperonin GroES, plays an essential role in assisting protein folding. The GroEL-GroES system forms a nano-cage that allows encapsulation of the non-native substrate proteins and provides a physical environment optimized to promote and accelerate protein folding. In Lactobacillus delbrueckii subsp. bulgaricus (strain ATCC 11842 / DSM 20081 / BCRC 10696 / JCM 1002 / NBRC 13953 / NCIMB 11778 / NCTC 12712 / WDCM 00102 / Lb 14), this protein is Chaperonin GroEL.